Consider the following 292-residue polypeptide: Elongation factor Ts (292 aa).

Residues 80-83 (TDFV) are involved in Mg(2+) ion dislocation from EF-Tu.

This sequence belongs to the EF-Ts family.

The protein resides in the cytoplasm. Associates with the EF-Tu.GDP complex and induces the exchange of GDP to GTP. It remains bound to the aminoacyl-tRNA.EF-Tu.GTP complex up to the GTP hydrolysis stage on the ribosome. The sequence is that of Elongation factor Ts from Tolumonas auensis (strain DSM 9187 / NBRC 110442 / TA 4).